The following is a 1439-amino-acid chain: Receptor-type tyrosine-protein phosphatase kappa (1439 aa).

The N-terminal stretch at 1 to 26 (MDTTAAAALPAFVALLLLSPWPLLGS) is a signal peptide. The Extracellular segment spans residues 27–752 (AQGQFSAGGC…PAKQTDRVVK (726 aa)). Residues 31–194 (FSAGGCTFDD…IQVLSYPCDK (164 aa)) form the MAM domain. Residues Asn-101, Asn-140, and Asn-211 are each glycosylated (N-linked (GlcNAc...) asparagine). Positions 196 to 281 (PHFLRLGDVE…TQSERGSGVS (86 aa)) constitute an Ig-like C2-type domain. Cys-216 and Cys-270 are disulfide-bonded. Fibronectin type-III domains lie at 294 to 389 (PIAP…CAEP), 392 to 488 (TPKT…TDED), 491 to 595 (GPVP…SAPT), and 597 to 680 (PDYE…GNLP). 9 N-linked (GlcNAc...) asparagine glycosylation sites follow: Asn-416, Asn-424, Asn-436, Asn-462, Asn-552, Asn-586, Asn-590, Asn-607, and Asn-690. The chain crosses the membrane as a helical span at residues 753–774 (IAGISAGILVFILLLLVVILIV). At 775-1439 (KKSKLAKKRK…DVALEYLESS (665 aa)) the chain is on the cytoplasmic side. Ser-856 is modified (phosphoserine). Tyrosine-protein phosphatase domains follow at residues 887–1141 (FKEE…ILEA) and 1173–1435 (LKDE…ALEY). Substrate is bound by residues Asp-1050, 1082 to 1088 (CSAGAGR), and Gln-1126. Cys-1082 acts as the Phosphocysteine intermediate in catalysis. Cys-1376 (phosphocysteine intermediate) is an active-site residue.

It belongs to the protein-tyrosine phosphatase family. Receptor class 2B subfamily. Post-translationally, this protein undergoes proteolytic processing. As to expression, high levels in lung, brain and colon; less in liver, pancreas, stomach, kidney, placenta and mammary carcinoma.

Its subcellular location is the cell junction. It localises to the adherens junction. The protein localises to the cell membrane. It catalyses the reaction O-phospho-L-tyrosyl-[protein] + H2O = L-tyrosyl-[protein] + phosphate. Regulation of processes involving cell contact and adhesion such as growth control, tumor invasion, and metastasis. Negative regulator of EGFR signaling pathway. Forms complexes with beta-catenin and gamma-catenin/plakoglobin. Beta-catenin may be a substrate for the catalytic activity of PTPRK/PTP-kappa. The polypeptide is Receptor-type tyrosine-protein phosphatase kappa (PTPRK) (Homo sapiens (Human)).